The primary structure comprises 468 residues: 3-isopropylmalate dehydratase large subunit (468 aa).

3 residues coordinate [4Fe-4S] cluster: cysteine 347, cysteine 407, and cysteine 410.

The protein belongs to the aconitase/IPM isomerase family. LeuC type 1 subfamily. As to quaternary structure, heterodimer of LeuC and LeuD. [4Fe-4S] cluster serves as cofactor.

It catalyses the reaction (2R,3S)-3-isopropylmalate = (2S)-2-isopropylmalate. The protein operates within amino-acid biosynthesis; L-leucine biosynthesis; L-leucine from 3-methyl-2-oxobutanoate: step 2/4. Its function is as follows. Catalyzes the isomerization between 2-isopropylmalate and 3-isopropylmalate, via the formation of 2-isopropylmaleate. The polypeptide is 3-isopropylmalate dehydratase large subunit (Campylobacter jejuni subsp. jejuni serotype O:23/36 (strain 81-176)).